Reading from the N-terminus, the 75-residue chain is Small ribosomal subunit protein bS18 (75 aa).

The protein belongs to the bacterial ribosomal protein bS18 family. As to quaternary structure, part of the 30S ribosomal subunit. Forms a tight heterodimer with protein bS6.

Binds as a heterodimer with protein bS6 to the central domain of the 16S rRNA, where it helps stabilize the platform of the 30S subunit. The chain is Small ribosomal subunit protein bS18 from Histophilus somni (strain 129Pt) (Haemophilus somnus).